The sequence spans 213 residues: Uridine kinase (213 aa).

ATP is bound at residue G15–S22.

The protein belongs to the uridine kinase family.

The protein localises to the cytoplasm. It catalyses the reaction uridine + ATP = UMP + ADP + H(+). The catalysed reaction is cytidine + ATP = CMP + ADP + H(+). It participates in pyrimidine metabolism; CTP biosynthesis via salvage pathway; CTP from cytidine: step 1/3. It functions in the pathway pyrimidine metabolism; UMP biosynthesis via salvage pathway; UMP from uridine: step 1/1. This chain is Uridine kinase, found in Salmonella agona (strain SL483).